Consider the following 696-residue polypeptide: MGNGMCSRKQKRIFQTLLLLTVVFGFLYGAMLYYELQTQLRKAEAVALKYQQHQESLSAQLQVVYEHRSRLEKSLQKERLEHKKAKEDFLVYKLEAQETLNKGRQDSNSRYSALNVQHQMLKSQHEELKKQHSDLEEEHRKQGEDFSRTFNDHKQKYLQLQQEKEQELSKLKETVYNLREENRQLRKAHQDIHTQLQDVKQQHKNLLSEHEQLVVTLEDHKSALAAAQTQVAEYKQLKDTLNRIPSLRKPDPAEQQNVTQVAHSPQGYNTAREKPTREVQEVSRNNDVWQNHEAVPGRAEDTKLYAPTHKEAEFQAPPEPIQQEVERREPEEHQVEEEHRKALEEEEMEQVGQAEHLEEEHDPSPEEQDREWKEQHEQREAANLLEGHARAEVYPSAKPMIKFQSPYEEQLEQQRLAVQQVEEAQQLREHQEALHQQRLQGHLLRQQEQQQQQVAREMALQRQAELEEGRPQHQEQLRQQAHYDAMDNDIVQGAEDQGIQGEEGAYERDNQHQDEAEGDPGNRHEPREQGPREADPESEADRAAVEDINPADDPNNQGEDEFEEAEQVREENLPDENEEQKQSNQKQENTEVEEHLVMAGNPDQQEDNVDEQYQEEAEEEVQEDLTEEKKRELEHNAEETYGENDENTDDKNNDGEEQEVRDDNRPKGREEHYEEEEEEEEDGAAVAEKSHRRAEM.

Gly2 carries the N-myristoyl glycine lipid modification. The Cytoplasmic portion of the chain corresponds to 2–12 (GNGMCSRKQKR). The chain crosses the membrane as a helical; Signal-anchor for type II membrane protein span at residues 13-33 (IFQTLLLLTVVFGFLYGAMLY). At 34-696 (YELQTQLRKA…AEKSHRRAEM (663 aa)) the chain is on the lumenal side. Residues 35 to 244 (ELQTQLRKAE…KQLKDTLNRI (210 aa)) adopt a coiled-coil conformation. The tract at residues 38 to 107 (TQLRKAEAVA…ETLNKGRQDS (70 aa)) is golgi targeting. Residues 80 to 175 (LEHKKAKEDF…QELSKLKETV (96 aa)) are endosome targeting. Disordered stretches follow at residues 122-145 (KSQH…QGED), 244-391 (IPSL…HARA), and 427-696 (LREH…RAEM). Over residues 123–145 (SQHEELKKQHSDLEEEHRKQGED) the composition is skewed to basic and acidic residues. Residues 176-248 (YNLREENRQL…DTLNRIPSLR (73 aa)) are golgi targeting. Over residues 254–269 (EQQNVTQVAHSPQGYN) the composition is skewed to polar residues. N-linked (GlcNAc...) asparagine glycosylation is present at Asn257. Basic and acidic residues-rich tracts occupy residues 271 to 281 (AREKPTREVQE), 298 to 313 (RAED…KEAE), 324 to 343 (EVER…RKAL), 355 to 364 (EHLEEEHDPS), and 370 to 380 (REWKEQHEQRE). At Ser364 the chain carries Phosphoserine. Residues 436–453 (QQRLQGHLLRQQEQQQQQ) are compositionally biased toward low complexity. 2 stretches are compositionally biased toward basic and acidic residues: residues 464–476 (AELE…HQEQ) and 505–545 (AYER…RAAV). At Ser538 the chain carries Phosphoserine. Acidic residues predominate over residues 604–626 (QQEDNVDEQYQEEAEEEVQEDLT). Residue Tyr613 is modified to Phosphotyrosine. Thr626 bears the Phosphothreonine mark. Composition is skewed to basic and acidic residues over residues 627–638 (EEKKRELEHNAE) and 661–672 (RDDNRPKGREEH). Tyr673 is subject to Phosphotyrosine. Over residues 673-683 (YEEEEEEEEDG) the composition is skewed to acidic residues.

Belongs to the GOLIM4 family. Phosphorylated probably by c-AMP-dependent kinases in its lumenal part. In terms of processing, O-glycosylated; modified by sialic acid residues. Post-translationally, N-glycosylated; N-glycans are probably of the complex type and modified by sialic acid residues.

Its subcellular location is the golgi apparatus. It localises to the golgi stack membrane. The protein localises to the endosome membrane. The protein resides in the membrane. Plays a role in endosome to Golgi protein trafficking; mediates protein transport along the late endosome-bypass pathway from the early endosome to the Golgi. The sequence is that of Golgi integral membrane protein 4 (GOLIM4) from Homo sapiens (Human).